We begin with the raw amino-acid sequence, 281 residues long: Putative E3 ubiquitin-protein ligase SINA-like 6 (281 aa).

The disordered stretch occupies residues 1 to 26; the sequence is MVGVLLSERNGSQKRHCSSISSDDGR. The RING-type zinc-finger motif lies at 45 to 81; the sequence is CPICYQALKIPVFQCGNGHLACSSCCPKLRNKCPACA. An SBD region spans residues 95 to 280; it reads VLESVLVPCR…MMLCINELKQ (186 aa). An SIAH-type zinc finger spans residues 98–156; that stretch reads SVLVPCRYADLGCTKTIYYGRESTHEKICNFSPCSCPVQGCNYTGSYKDLYEHYDLTHS. Positions 103, 110, 122, 126, 133, 138, 150, and 155 each coordinate Zn(2+).

This sequence belongs to the SINA (Seven in absentia) family.

The enzyme catalyses S-ubiquitinyl-[E2 ubiquitin-conjugating enzyme]-L-cysteine + [acceptor protein]-L-lysine = [E2 ubiquitin-conjugating enzyme]-L-cysteine + N(6)-ubiquitinyl-[acceptor protein]-L-lysine.. Its pathway is protein modification; protein ubiquitination. E3 ubiquitin-protein ligase that mediates ubiquitination and subsequent proteasomal degradation of target proteins. E3 ubiquitin ligases accept ubiquitin from an E2 ubiquitin-conjugating enzyme in the form of a thioester and then directly transfers the ubiquitin to targeted substrates. It probably triggers the ubiquitin-mediated degradation of different substrates. This chain is Putative E3 ubiquitin-protein ligase SINA-like 6, found in Arabidopsis thaliana (Mouse-ear cress).